Consider the following 878-residue polypeptide: Alanine--tRNA ligase (878 aa).

Zn(2+) is bound by residues His-558, His-562, Cys-663, and His-667.

The protein belongs to the class-II aminoacyl-tRNA synthetase family. It depends on Zn(2+) as a cofactor.

The protein resides in the cytoplasm. The enzyme catalyses tRNA(Ala) + L-alanine + ATP = L-alanyl-tRNA(Ala) + AMP + diphosphate. Catalyzes the attachment of alanine to tRNA(Ala) in a two-step reaction: alanine is first activated by ATP to form Ala-AMP and then transferred to the acceptor end of tRNA(Ala). Also edits incorrectly charged Ser-tRNA(Ala) and Gly-tRNA(Ala) via its editing domain. The polypeptide is Alanine--tRNA ligase (Mycoplasmopsis synoviae (strain 53) (Mycoplasma synoviae)).